The chain runs to 91 residues: Acyl-CoA-binding domain-containing protein 2 (91 aa).

An ACB domain is found at 3–88 (LQEEFEEFAE…VKQLLEEASA (86 aa)). An acyl-CoA-binding positions include Lys15, 30-34 (YGLYK), Lys52, Lys56, and Tyr75.

Belongs to the ACBP family. As to expression, highly expressed in leaves. Expressed at low levels in roots and seeds.

It is found in the cytoplasm. It localises to the cytosol. In terms of biological role, binds medium- and long-chain acyl-CoA esters with high affinity. Can interact in vitro with linolenoyl-CoA. Binds palmitoyl-CoA and linoleoyl-CoA in vitro. Binds phosphatidic acid (PA) and phosphatidylcholine (PC) in vitro. May play a role in the biosynthesis of phospholipids. In Oryza sativa subsp. japonica (Rice), this protein is Acyl-CoA-binding domain-containing protein 2.